The primary structure comprises 236 residues: 2,3,4,5-tetrahydropyridine-2,6-dicarboxylate N-acetyltransferase (236 aa).

This sequence belongs to the transferase hexapeptide repeat family. DapH subfamily.

The catalysed reaction is (S)-2,3,4,5-tetrahydrodipicolinate + acetyl-CoA + H2O = L-2-acetamido-6-oxoheptanedioate + CoA. It participates in amino-acid biosynthesis; L-lysine biosynthesis via DAP pathway; LL-2,6-diaminopimelate from (S)-tetrahydrodipicolinate (acetylase route): step 1/3. In terms of biological role, catalyzes the transfer of an acetyl group from acetyl-CoA to tetrahydrodipicolinate. This Lactobacillus acidophilus (strain ATCC 700396 / NCK56 / N2 / NCFM) protein is 2,3,4,5-tetrahydropyridine-2,6-dicarboxylate N-acetyltransferase.